The primary structure comprises 294 residues: tRNA dimethylallyltransferase (294 aa).

11 to 18 (GPTAVGKT) serves as a coordination point for ATP. 13-18 (TAVGKT) contributes to the substrate binding site. Residues 36-39 (DSQQ) are interaction with substrate tRNA.

This sequence belongs to the IPP transferase family. As to quaternary structure, monomer. Requires Mg(2+) as cofactor.

The catalysed reaction is adenosine(37) in tRNA + dimethylallyl diphosphate = N(6)-dimethylallyladenosine(37) in tRNA + diphosphate. Its function is as follows. Catalyzes the transfer of a dimethylallyl group onto the adenine at position 37 in tRNAs that read codons beginning with uridine, leading to the formation of N6-(dimethylallyl)adenosine (i(6)A). This Lactococcus lactis subsp. cremoris (strain MG1363) protein is tRNA dimethylallyltransferase.